A 509-amino-acid chain; its full sequence is Citrinin biosynthesis transcriptional activator mrl3 (509 aa).

The tract at residues 1–22 is disordered; it reads MASTAHRQPSRPTTRQRQRTGR. A DNA-binding region (zn(2)-C6 fungal-type) is located at residues 24–51; it reads CEECRRRKLRCDGQQPRCGVCVDSGVTC. The segment at 97–143 is disordered; the sequence is STPLTNDHHDGCSVSSASSRSDSNPPPTVSEPDMSLPNTTTSVSSAP. Over residues 109–119 the composition is skewed to low complexity; it reads SVSSASSRSDS. Over residues 132 to 143 the composition is skewed to polar residues; the sequence is LPNTTTSVSSAP.

Its subcellular location is the nucleus. In terms of biological role, transcription factor that regulates the expression of the gene cluster that mediates the biosynthesis of the mycotoxin citrinin, a hepato-nephrotoxic compound to humans due to inhibition of respiration complex III. The chain is Citrinin biosynthesis transcriptional activator mrl3 from Monascus ruber (Mold).